A 321-amino-acid chain; its full sequence is Lipoyl synthase (321 aa).

The [4Fe-4S] cluster site is built by Cys-68, Cys-73, Cys-79, Cys-94, Cys-98, Cys-101, and Ser-308. The Radical SAM core domain occupies 80–297 (FNHGTATFMI…KELAESIGFT (218 aa)).

The protein belongs to the radical SAM superfamily. Lipoyl synthase family. [4Fe-4S] cluster is required as a cofactor.

The protein resides in the cytoplasm. The enzyme catalyses [[Fe-S] cluster scaffold protein carrying a second [4Fe-4S](2+) cluster] + N(6)-octanoyl-L-lysyl-[protein] + 2 oxidized [2Fe-2S]-[ferredoxin] + 2 S-adenosyl-L-methionine + 4 H(+) = [[Fe-S] cluster scaffold protein] + N(6)-[(R)-dihydrolipoyl]-L-lysyl-[protein] + 4 Fe(3+) + 2 hydrogen sulfide + 2 5'-deoxyadenosine + 2 L-methionine + 2 reduced [2Fe-2S]-[ferredoxin]. Its pathway is protein modification; protein lipoylation via endogenous pathway; protein N(6)-(lipoyl)lysine from octanoyl-[acyl-carrier-protein]: step 2/2. In terms of biological role, catalyzes the radical-mediated insertion of two sulfur atoms into the C-6 and C-8 positions of the octanoyl moiety bound to the lipoyl domains of lipoate-dependent enzymes, thereby converting the octanoylated domains into lipoylated derivatives. This is Lipoyl synthase from Shewanella pealeana (strain ATCC 700345 / ANG-SQ1).